The chain runs to 213 residues: ATP phosphoribosyltransferase (213 aa).

The protein belongs to the ATP phosphoribosyltransferase family. Short subfamily. Heteromultimer composed of HisG and HisZ subunits.

The protein resides in the cytoplasm. It carries out the reaction 1-(5-phospho-beta-D-ribosyl)-ATP + diphosphate = 5-phospho-alpha-D-ribose 1-diphosphate + ATP. It participates in amino-acid biosynthesis; L-histidine biosynthesis; L-histidine from 5-phospho-alpha-D-ribose 1-diphosphate: step 1/9. Catalyzes the condensation of ATP and 5-phosphoribose 1-diphosphate to form N'-(5'-phosphoribosyl)-ATP (PR-ATP). Has a crucial role in the pathway because the rate of histidine biosynthesis seems to be controlled primarily by regulation of HisG enzymatic activity. The polypeptide is ATP phosphoribosyltransferase (Listeria monocytogenes serotype 4a (strain HCC23)).